Here is a 301-residue protein sequence, read N- to C-terminus: Homoserine O-acetyltransferase (301 aa).

Residue Cys142 is the Acyl-thioester intermediate of the active site. Substrate is bound by residues Lys163 and Ser192. The Proton acceptor role is filled by His235. Glu237 is a catalytic residue. A substrate-binding site is contributed by Arg249.

Belongs to the MetA family.

The protein resides in the cytoplasm. The enzyme catalyses L-homoserine + acetyl-CoA = O-acetyl-L-homoserine + CoA. It participates in amino-acid biosynthesis; L-methionine biosynthesis via de novo pathway; O-acetyl-L-homoserine from L-homoserine: step 1/1. Functionally, transfers an acetyl group from acetyl-CoA to L-homoserine, forming acetyl-L-homoserine. The polypeptide is Homoserine O-acetyltransferase (Bacillus thuringiensis subsp. konkukian (strain 97-27)).